Here is a 411-residue protein sequence, read N- to C-terminus: Citrate synthase (411 aa).

Catalysis depends on residues histidine 304 and aspartate 363.

The protein belongs to the citrate synthase family.

The enzyme catalyses oxaloacetate + acetyl-CoA + H2O = citrate + CoA + H(+). The protein operates within carbohydrate metabolism; tricarboxylic acid cycle; isocitrate from oxaloacetate: step 1/2. In Rickettsia australis, this protein is Citrate synthase (gltA).